Here is a 234-residue protein sequence, read N- to C-terminus: Ribonuclease HII (234 aa).

One can recognise an RNase H type-2 domain in the interval 16–207; that stretch reads ALVAGVDEAG…VRRMLTPKAI (192 aa). 3 residues coordinate a divalent metal cation: Asp22, Glu23, and Asp115.

The protein belongs to the RNase HII family. Mn(2+) serves as cofactor. It depends on Mg(2+) as a cofactor.

It is found in the cytoplasm. The catalysed reaction is Endonucleolytic cleavage to 5'-phosphomonoester.. In terms of biological role, endonuclease that specifically degrades the RNA of RNA-DNA hybrids. This Xylella fastidiosa (strain M23) protein is Ribonuclease HII.